The primary structure comprises 466 residues: 3-isopropylmalate dehydratase large subunit (466 aa).

[4Fe-4S] cluster contacts are provided by C347, C407, and C410.

This sequence belongs to the aconitase/IPM isomerase family. LeuC type 1 subfamily. Heterodimer of LeuC and LeuD. The cofactor is [4Fe-4S] cluster.

The catalysed reaction is (2R,3S)-3-isopropylmalate = (2S)-2-isopropylmalate. It functions in the pathway amino-acid biosynthesis; L-leucine biosynthesis; L-leucine from 3-methyl-2-oxobutanoate: step 2/4. Functionally, catalyzes the isomerization between 2-isopropylmalate and 3-isopropylmalate, via the formation of 2-isopropylmaleate. The protein is 3-isopropylmalate dehydratase large subunit of Pectobacterium carotovorum subsp. carotovorum (strain PC1).